Here is a 204-residue protein sequence, read N- to C-terminus: Urease accessory protein UreG (204 aa).

A GTP-binding site is contributed by 12 to 19 (GPVGSGKT).

The protein belongs to the SIMIBI class G3E GTPase family. UreG subfamily. In terms of assembly, homodimer. UreD, UreF and UreG form a complex that acts as a GTP-hydrolysis-dependent molecular chaperone, activating the urease apoprotein by helping to assemble the nickel containing metallocenter of UreC. The UreE protein probably delivers the nickel.

It is found in the cytoplasm. Its function is as follows. Facilitates the functional incorporation of the urease nickel metallocenter. This process requires GTP hydrolysis, probably effectuated by UreG. In Pseudomonas aeruginosa (strain LESB58), this protein is Urease accessory protein UreG.